Here is a 657-residue protein sequence, read N- to C-terminus: Leishmanolysin (657 aa).

The N-terminal stretch at 1 to 41 (MSVDSSSSSTHRRRCVAARLVRLAAAGAAVTVAVGTAAAWA) is a signal peptide. Positions 42-102 (HAGALQHRCI…DPRPGSAPTV (61 aa)) are cleaved as a propeptide — activation peptide. Residues 44 to 611 (GALQHRCIHD…DRMVGLATAA (568 aa)) lie on the Extracellular side of the membrane. Asparagine 107 carries N-linked (GlcNAc...) asparagine glycosylation. 2 disulfide bridges follow: cysteine 127/cysteine 144 and cysteine 193/cysteine 232. Histidine 266 serves as a coordination point for Zn(2+). The active site involves glutamate 267. Histidine 270 provides a ligand contact to Zn(2+). Asparagine 302 is a glycosylation site (N-linked (GlcNAc...) asparagine). 7 disulfides stabilise this stretch: cysteine 316–cysteine 388, cysteine 395–cysteine 458, cysteine 408–cysteine 427, cysteine 417–cysteine 492, cysteine 469–cysteine 513, cysteine 518–cysteine 568, and cysteine 538–cysteine 561. Histidine 336 lines the Zn(2+) pocket. 5 N-linked (GlcNAc...) asparagine glycosylation sites follow: asparagine 399, asparagine 409, asparagine 445, asparagine 466, and asparagine 501. Residues 612–632 (TVLLGMVLSLMALVVVWLLLV) traverse the membrane as a helical segment. Residues 633-657 (SCPWWCCKLGGPPASVTPACSPETE) are Cytoplasmic-facing.

Belongs to the peptidase M8 family. Zn(2+) serves as cofactor.

Its subcellular location is the membrane. The enzyme catalyses Preference for hydrophobic residues at P1 and P1' and basic residues at P2' and P3'. A model nonapeptide is cleaved at -Ala-Tyr-|-Leu-Lys-Lys-.. Has an integral role during the infection of macrophages in the mammalian host. The chain is Leishmanolysin (mspC) from Leishmania tropica.